Reading from the N-terminus, the 749-residue chain is Sentrin-specific protease 5 (749 aa).

Basic and acidic residues predominate over residues 268-279; that stretch reads TGDHQENLRDNN. Disordered regions lie at residues 268-288 and 394-440; these read TGDHQENLRDNNTEGDNCNPV and QESG…EEDG. The segment at 557 to 718 is protease; it reads FYNKHMLDMD…VFVLQYCKCL (162 aa). Residues histidine 640, aspartate 657, and cysteine 707 contribute to the active site.

Belongs to the peptidase C48 family. In terms of assembly, interacts with CCAR2.

It is found in the nucleus. It localises to the nucleolus. Its function is as follows. Protease that catalyzes two essential functions in the SUMO pathway: processing of full-length SUMO3 to its mature form and deconjugation of SUMO2 and SUMO3 from targeted proteins. Has weak proteolytic activity against full-length SUMO1 or SUMO1 conjugates. Required for cell division. In Mus musculus (Mouse), this protein is Sentrin-specific protease 5 (Senp5).